Consider the following 318-residue polypeptide: Thymidylate synthase (318 aa).

DUMP-binding positions include arginine 26 and 181–182; that span reads RR. Residue cysteine 201 is the Nucleophile of the active site. DUMP-binding positions include 221–224, asparagine 232, and 262–264; these read RSAD and HIY. Aspartate 224 is a (6R)-5,10-methylene-5,6,7,8-tetrahydrofolate binding site. Alanine 317 is a (6R)-5,10-methylene-5,6,7,8-tetrahydrofolate binding site.

The protein belongs to the thymidylate synthase family. Bacterial-type ThyA subfamily. Homodimer.

It localises to the cytoplasm. The catalysed reaction is dUMP + (6R)-5,10-methylene-5,6,7,8-tetrahydrofolate = 7,8-dihydrofolate + dTMP. It functions in the pathway pyrimidine metabolism; dTTP biosynthesis. Catalyzes the reductive methylation of 2'-deoxyuridine-5'-monophosphate (dUMP) to 2'-deoxythymidine-5'-monophosphate (dTMP) while utilizing 5,10-methylenetetrahydrofolate (mTHF) as the methyl donor and reductant in the reaction, yielding dihydrofolate (DHF) as a by-product. This enzymatic reaction provides an intracellular de novo source of dTMP, an essential precursor for DNA biosynthesis. In Staphylococcus haemolyticus (strain JCSC1435), this protein is Thymidylate synthase.